Reading from the N-terminus, the 408-residue chain is Imidazolonepropionase (408 aa).

Positions 73 and 75 each coordinate Fe(3+). 2 residues coordinate Zn(2+): His73 and His75. Positions 82, 145, and 178 each coordinate 4-imidazolone-5-propanoate. Residue Tyr145 coordinates N-formimidoyl-L-glutamate. His243 lines the Fe(3+) pocket. Residue His243 participates in Zn(2+) binding. Gln246 serves as a coordination point for 4-imidazolone-5-propanoate. Residue Asp318 coordinates Fe(3+). Asp318 lines the Zn(2+) pocket. Positions 320 and 322 each coordinate N-formimidoyl-L-glutamate. Ser323 serves as a coordination point for 4-imidazolone-5-propanoate.

The protein belongs to the metallo-dependent hydrolases superfamily. HutI family. The cofactor is Zn(2+). It depends on Fe(3+) as a cofactor.

Its subcellular location is the cytoplasm. It carries out the reaction 4-imidazolone-5-propanoate + H2O = N-formimidoyl-L-glutamate. It participates in amino-acid degradation; L-histidine degradation into L-glutamate; N-formimidoyl-L-glutamate from L-histidine: step 3/3. In terms of biological role, catalyzes the hydrolytic cleavage of the carbon-nitrogen bond in imidazolone-5-propanoate to yield N-formimidoyl-L-glutamate. It is the third step in the universal histidine degradation pathway. This Shewanella baltica (strain OS195) protein is Imidazolonepropionase.